The chain runs to 227 residues: tRNA (guanine-N(1)-)-methyltransferase (227 aa).

S-adenosyl-L-methionine is bound by residues Gly112 and 132–137 (IGDFIL).

The protein belongs to the RNA methyltransferase TrmD family. As to quaternary structure, homodimer.

It is found in the cytoplasm. The catalysed reaction is guanosine(37) in tRNA + S-adenosyl-L-methionine = N(1)-methylguanosine(37) in tRNA + S-adenosyl-L-homocysteine + H(+). In terms of biological role, specifically methylates guanosine-37 in various tRNAs. The chain is tRNA (guanine-N(1)-)-methyltransferase from Sulfurovum sp. (strain NBC37-1).